A 142-amino-acid polypeptide reads, in one-letter code: Cystatin-8 (142 aa).

The N-terminal stretch at 1–21 (MPRCRWLSLILLTIPLALVAR) is a signal peptide. Residues N27 and N39 are each glycosylated (N-linked (GlcNAc...) asparagine). Residues 77–81 (QVTNL) carry the Secondary area of contact motif. 2 disulfides stabilise this stretch: C95–C105 and C119–C139.

Belongs to the cystatin family. Proximal caput region of the epididymis. Lower expression in the testis. Within the testis it is localized to the elongating spermatids, whereas within the epididymis it is exclusively synthesized by the proximal caput epithelium.

The protein localises to the secreted. In terms of biological role, performs a specialized role during sperm development and maturation. The protein is Cystatin-8 (CST8) of Homo sapiens (Human).